Consider the following 93-residue polypeptide: Small ribosomal subunit protein uS19 (93 aa).

The disordered stretch occupies residues E73–K93. Residues Y80–K93 show a composition bias toward basic residues.

The protein belongs to the universal ribosomal protein uS19 family.

In terms of biological role, protein S19 forms a complex with S13 that binds strongly to the 16S ribosomal RNA. The sequence is that of Small ribosomal subunit protein uS19 (rpsS) from Aster yellows phytoplasma.